We begin with the raw amino-acid sequence, 547 residues long: Chaperonin GroEL (547 aa).

ATP contacts are provided by residues 30–33, Lys51, 87–91, Gly415, 479–481, and Asp495; these read TLGP, DGTTT, and NAA.

It belongs to the chaperonin (HSP60) family. As to quaternary structure, forms a cylinder of 14 subunits composed of two heptameric rings stacked back-to-back. Interacts with the co-chaperonin GroES.

Its subcellular location is the cytoplasm. It catalyses the reaction ATP + H2O + a folded polypeptide = ADP + phosphate + an unfolded polypeptide.. Its function is as follows. Together with its co-chaperonin GroES, plays an essential role in assisting protein folding. The GroEL-GroES system forms a nano-cage that allows encapsulation of the non-native substrate proteins and provides a physical environment optimized to promote and accelerate protein folding. The chain is Chaperonin GroEL from Pseudomonas fluorescens (strain ATCC BAA-477 / NRRL B-23932 / Pf-5).